Reading from the N-terminus, the 141-residue chain is Period circadian protein (141 aa).

Residues 1 to 141 (EGSGGSGSSG…VTLTESLLNK (141 aa)) form a disordered region. A compositionally biased stretch (polar residues) spans 11 to 23 (HFTTGSNVHMSSV). The span at 29–68 (GGTGGTGTGTGTGTGTGTGTGTGTGTGTGTGTGTGTGTGT) shows a compositional bias: gly residues. 19 repeat units span residues 30 to 31 (GT), 33 to 34 (GT), 35 to 36 (GT), 37 to 38 (GT), 39 to 40 (GT), 41 to 42 (GT), 43 to 44 (GT), 45 to 46 (GT), 47 to 48 (GT), 49 to 50 (GT), 51 to 52 (GT), 53 to 54 (GT), 55 to 56 (GT), 57 to 58 (GT), 59 to 60 (GT), 61 to 62 (GT), 63 to 64 (GT), 65 to 66 (GT), and 67 to 68 (GT). The interval 30 to 94 (GTGGTGTGTG…ANGTGTGKGT (65 aa)) is 32 X 2 AA approximate tandem repeats of G-T. The 20; approximate repeat unit spans residues 69-70 (AS). The span at 69–85 (ASGTATGTASGTATGTA) shows a compositional bias: low complexity. Repeat unit 21 spans residues 71–72 (GT). The stretch at 73-74 (AT) is one 22; approximate repeat. Repeat 23 spans residues 75–76 (GT). A 24; approximate repeat occupies 77 to 78 (AS). Repeat unit 25 spans residues 79–80 (GT). Residues 81–82 (AT) form a 26; approximate repeat. The stretch at 83 to 84 (GT) is repeat 27. A 28; approximate repeat occupies 85-86 (AN). Repeat copies occupy residues 87–88 (GT) and 89–90 (GT). Residues 91-92 (GK) form a 31; approximate repeat. Repeat 32 spans residues 93–94 (GT). Residues 101-113 (SGSGSGTGTGTGT) are compositionally biased toward gly residues. Residues 114–129 (GTTTTTTTGNNSSSST) show a composition bias toward low complexity. Over residues 130 to 141 (PPVTLTESLLNK) the composition is skewed to polar residues.

In terms of assembly, forms a heterodimer with timeless (TIM); the complex then translocates into the nucleus. In terms of processing, phosphorylated with a circadian rhythmicity, probably by the double-time protein (dbt). Phosphorylation could be implicated in the stability of per monomer and in the formation of heterodimer per-tim.

It is found in the nucleus. The protein localises to the cytoplasm. The protein resides in the perinuclear region. Its function is as follows. Essential for biological clock functions. Determines the period length of circadian and ultradian rhythms; an increase in PER dosage leads to shortened circadian rhythms and a decrease leads to lengthened circadian rhythms. Essential for the circadian rhythmicity of locomotor activity, eclosion behavior, and for the rhythmic component of the male courtship song that originates in the thoracic nervous system. The biological cycle depends on the rhythmic formation and nuclear localization of the TIM-PER complex. Light induces the degradation of TIM, which promotes elimination of PER. Nuclear activity of the heterodimer coordinatively regulates PER and TIM transcription through a negative feedback loop. Behaves as a negative element in circadian transcriptional loop. Does not appear to bind DNA, suggesting indirect transcriptional inhibition. In Drosophila serrata (Fruit fly), this protein is Period circadian protein (per).